A 1548-amino-acid chain; its full sequence is Nuclear factor of activated T-cells 5 (1548 aa).

Positions Gln54–Ser106 are disordered. The span at Val81–Ser106 shows a compositional bias: low complexity. A Phosphoserine modification is found at Ser137. Lys139 carries the N6-acetyllysine modification. The segment covering Leu141–Ser151 has biased composition (polar residues). 3 disordered regions span residues Leu141–Gly180, Trp192–Ser237, and Thr258–Lys282. At Ser151 the chain carries Phosphoserine. Thr152 bears the Phosphothreonine; by CDK5 mark. Ser172 carries the post-translational modification Phosphoserine. Residues Ser196–Asn209 show a composition bias toward low complexity. A compositionally biased stretch (basic residues) spans Lys217 to Val229. The segment covering Thr258–Gly277 has biased composition (polar residues). The 180-residue stretch at Lys281–Gly460 folds into the RHD domain. Residues Arg310–Gly317 mediate DNA binding. Lys572 participates in a covalent cross-link: Glycyl lysine isopeptide (Lys-Gly) (interchain with G-Cter in SUMO1); alternate. A Glycyl lysine isopeptide (Lys-Gly) (interchain with G-Cter in SUMO2); alternate cross-link involves residue Lys572. Ser577 is subject to Phosphoserine. Lys619 is covalently cross-linked (Glycyl lysine isopeptide (Lys-Gly) (interchain with G-Cter in SUMO2)). 6 disordered regions span residues Gly659–Gln682, Thr750–Val777, Pro851–Gln892, Ser970–Ala1010, Leu1097–Pro1127, and Met1257–Gln1388. Composition is skewed to low complexity over residues Ser662 to Ser672 and Glu751 to Gln765. Polar residues-rich tracts occupy residues Ile766–Val777, Pro851–Ala860, and Val876–Ser886. The span at Thr979–Thr993 shows a compositional bias: low complexity. A compositionally biased stretch (polar residues) spans Val1113 to Pro1127. Low complexity predominate over residues Gln1264–Gln1283. Composition is skewed to polar residues over residues Ser1284–Lys1300 and Phe1308–Ala1333. Residues Pro1334–Pro1348 show a composition bias toward low complexity. The span at Thr1349–Gln1388 shows a compositional bias: polar residues.

In terms of assembly, homodimer when bound to DNA, completely encircles its DNA target. Interacts with CIDEC; this interaction is direct and retains NFAT5 in the cytoplasm. Does not bind with Fos and Jun transcription factors. Interacts with DDX5 and DDX17; this interaction leads to DDX5/DDX17 recruitment to LNC2 and S100A4 promoters and NFAT5-mediated DDX5/DDX17-enhanced transactivation. Phosphorylated. Phosphorylated at Thr-152 by CDK5 in response to osmotic stress; this phosphorylation mediates its rapid nuclear localization. Post-translationally, poly-ADP-ribosylated by PARP1 in response to DNA damage, promoting recruitment to sites of R-loop-associated DNA damage.

The protein localises to the nucleus. Its subcellular location is the cytoplasm. The protein resides in the chromosome. Transcription factor involved, among others, in the transcriptional regulation of osmoprotective and inflammatory genes. Binds the DNA consensus sequence 5'-[ACT][AG]TGGAAA[CAT]A[TA][ATC][CA][ATG][GT][GAC][CG][CT]-3'. Mediates the transcriptional response to hypertonicity. Positively regulates the transcription of LCN2 and S100A4 genes; optimal transactivation of these genes requires the presence of DDX5/DDX17. Also involved in the DNA damage response by preventing formation of R-loops; R-loops are composed of a DNA:RNA hybrid and the associated non-template single-stranded DNA. The polypeptide is Nuclear factor of activated T-cells 5 (Nfat5) (Rattus norvegicus (Rat)).